Here is a 563-residue protein sequence, read N- to C-terminus: Arylsulfatase K (563 aa).

The first 17 residues, 1–17 (MLLLLVSVIVALALVAP), serve as a signal peptide directing secretion. Residues aspartate 40 and cysteine 80 each coordinate Ca(2+). Cysteine 80 acts as the Nucleophile in catalysis. Position 80 is a 3-oxoalanine (Cys) (cysteine 80). Asparagine 108 is a glycosylation site (N-linked (GlcNAc...) asparagine). Lysine 128 lines the substrate pocket. N-linked (GlcNAc...) asparagine glycosylation occurs at asparagine 191. Histidine 249 contacts substrate. An N-linked (GlcNAc...) asparagine glycan is attached at asparagine 260. Residues aspartate 311 and histidine 312 each contribute to the Ca(2+) site. Asparagine 373, asparagine 411, and asparagine 496 each carry an N-linked (GlcNAc...) asparagine glycan.

Belongs to the sulfatase family. The cofactor is Ca(2+). The conversion to 3-oxoalanine (also known as C-formylglycine, FGly), of a serine or cysteine residue in prokaryotes and of a cysteine residue in eukaryotes, is critical for catalytic activity. In terms of processing, the 75-kDa precursor undergoes proteolytic processing to yield a 23 kDa form. Post-translationally, N-glycosylated with both high mannose and complex type sugars.

It localises to the secreted. The protein localises to the lysosome. The enzyme catalyses an aryl sulfate + H2O = a phenol + sulfate + H(+). It carries out the reaction Hydrolysis of the 2-sulfate groups of the 2-O-sulfo-D-glucuronate residues of chondroitin sulfate, heparin and heparitin sulfate.. Functionally, catalyzes the hydrolysis of pseudosubstrates such as p-nitrocatechol sulfate and p-nitrophenyl sulfate. Catalyzes the hydrolysis of the 2-sulfate groups of the 2-O-sulfo-D-glucuronate residues of chondroitin sulfate, heparin and heparitin sulfate. Acts selectively on 2-sulfoglucuronate and lacks activity against 2-sulfoiduronate. The chain is Arylsulfatase K (Arsk) from Rattus norvegicus (Rat).